The following is an 846-amino-acid chain: Rho GTPase-activating protein 12 (846 aa).

The region spanning Pro12 to Arg74 is the SH3 domain. Residues Leu152–Arg175 show a composition bias toward polar residues. The tract at residues Leu152 to Pro241 is disordered. A phosphoserine mark is found at Ser165 and Ser176. Polar residues predominate over residues Thr191 to Asp200. Phosphoserine occurs at positions 201, 213, and 215. The span at Thr224–Asn234 shows a compositional bias: polar residues. A phosphothreonine mark is found at Thr230 and Thr231. The residue at position 240 (Ser240) is a Phosphoserine. At Tyr243 the chain carries Phosphotyrosine. WW domains are found at residues Ile265–Trp298 and Asp358–Tyr391. The interval Trp293–Glu316 is disordered. Disordered regions lie at residues Asp428–Lys466 and Glu580–Asn629. Residues Asn445–Pro461 show a composition bias toward polar residues. Positions Asp463–Asn575 constitute a PH domain. Positions Glu580 to Pro590 are enriched in acidic residues. At Ser592 the chain carries Phosphoserine. The segment covering Gly594 to Lys609 has biased composition (basic and acidic residues). In terms of domain architecture, Rho-GAP spans Ser656–Phe844.

In terms of biological role, GTPase activator for the Rho-type GTPases by converting them to an inactive GDP-bound state. The chain is Rho GTPase-activating protein 12 (ARHGAP12) from Homo sapiens (Human).